The primary structure comprises 186 residues: ATP synthase subunit b, chloroplastic (186 aa).

The helical transmembrane segment at 26–44 (ILETNLINLGVVIGTLLYF) threads the bilayer.

This sequence belongs to the ATPase B chain family. F-type ATPases have 2 components, F(1) - the catalytic core - and F(0) - the membrane proton channel. F(1) has five subunits: alpha(3), beta(3), gamma(1), delta(1), epsilon(1). F(0) has four main subunits: a(1), b(1), b'(1) and c(10-14). The alpha and beta chains form an alternating ring which encloses part of the gamma chain. F(1) is attached to F(0) by a central stalk formed by the gamma and epsilon chains, while a peripheral stalk is formed by the delta, b and b' chains.

It localises to the plastid. The protein localises to the chloroplast thylakoid membrane. Functionally, f(1)F(0) ATP synthase produces ATP from ADP in the presence of a proton or sodium gradient. F-type ATPases consist of two structural domains, F(1) containing the extramembraneous catalytic core and F(0) containing the membrane proton channel, linked together by a central stalk and a peripheral stalk. During catalysis, ATP synthesis in the catalytic domain of F(1) is coupled via a rotary mechanism of the central stalk subunits to proton translocation. In terms of biological role, component of the F(0) channel, it forms part of the peripheral stalk, linking F(1) to F(0). This Chara vulgaris (Common stonewort) protein is ATP synthase subunit b, chloroplastic.